An 82-amino-acid chain; its full sequence is Small ribosomal subunit protein bS16 (82 aa).

It belongs to the bacterial ribosomal protein bS16 family.

The chain is Small ribosomal subunit protein bS16 from Vibrio atlanticus (strain LGP32) (Vibrio splendidus (strain Mel32)).